A 239-amino-acid chain; its full sequence is 1-(5-phosphoribosyl)-5-[(5-phosphoribosylamino)methylideneamino] imidazole-4-carboxamide isomerase (239 aa).

The active-site Proton acceptor is Asp-8. The active-site Proton donor is Asp-129.

This sequence belongs to the HisA/HisF family.

It is found in the cytoplasm. It carries out the reaction 1-(5-phospho-beta-D-ribosyl)-5-[(5-phospho-beta-D-ribosylamino)methylideneamino]imidazole-4-carboxamide = 5-[(5-phospho-1-deoxy-D-ribulos-1-ylimino)methylamino]-1-(5-phospho-beta-D-ribosyl)imidazole-4-carboxamide. It participates in amino-acid biosynthesis; L-histidine biosynthesis; L-histidine from 5-phospho-alpha-D-ribose 1-diphosphate: step 4/9. This is 1-(5-phosphoribosyl)-5-[(5-phosphoribosylamino)methylideneamino] imidazole-4-carboxamide isomerase from Legionella pneumophila subsp. pneumophila (strain Philadelphia 1 / ATCC 33152 / DSM 7513).